The primary structure comprises 495 residues: Solute carrier family 2, facilitated glucose transporter member 3 (495 aa).

Residues 1 to 10 (MGTQKVTVSL) lie on the Cytoplasmic side of the membrane. Residues 11–32 (IFALSIATIGSFQFGYNTGVIN) form a helical membrane-spanning segment. The Extracellular portion of the chain corresponds to 33-64 (APETIIKDFLNYTLEEKSENLPTEVLLTSLWS). N-linked (GlcNAc...) asparagine glycosylation occurs at N43. The chain crosses the membrane as a helical span at residues 65-85 (LSVAIFSVGGMIGSFSVGLFV). Residues 86-90 (NRFGR) lie on the Cytoplasmic side of the membrane. Residues 91-111 (RNSMLMVNLLAVAGGCLMGFC) form a helical membrane-spanning segment. Over 112 to 118 (KIAQSVE) the chain is Extracellular. A helical membrane pass occupies residues 119–142 (MLILGRLIIGLFCGLCTGFVPMYI). Over 143-153 (GEISPTALRGA) the chain is Cytoplasmic. A helical membrane pass occupies residues 154–174 (FGTLNQLGIVIGILVAQIFGL). Position 159 (Q159) interacts with D-glucose. The Extracellular portion of the chain corresponds to 175-183 (KVIMGTEEL). The chain crosses the membrane as a helical span at residues 184–204 (WPLLLGFTIIPAVLQSAALPF). Residues 205–269 (CPESPRFLLI…LFRSRSYRQP (65 aa)) lie on the Cytoplasmic side of the membrane. Residue T232 is modified to Phosphothreonine. Residues 270-290 (IIISIMLQLSQQLSGINAVFY) form a helical membrane-spanning segment. Residues 277–279 (QLS) are important for selectivity against fructose. Residues 280–281 (QQ) and N286 contribute to the D-glucose site. Residues 291-304 (YSTGIFKDAGVEEP) lie on the Extracellular side of the membrane. Residues 305-325 (IYATIGAGVVNTIFTVVSLFL) form a helical membrane-spanning segment. Position 315 (N315) interacts with D-glucose. At 326–331 (VERAGR) the chain is on the cytoplasmic side. Residues 332–352 (RTLHMIGLGGMAVCSILMTIS) traverse the membrane as a helical segment. The Extracellular portion of the chain corresponds to 353–363 (LLLKDNYNWMS). Residues 364-389 (FVCIGAILVFVAFFEIGPGPIPWFIV) traverse the membrane as a helical segment. D-glucose is bound by residues E378 and W386. Residues 390-399 (AELFSQGPRP) are Cytoplasmic-facing. A helical membrane pass occupies residues 400-420 (AAMAVAGCSNWTSNFLVGLLF). The Extracellular segment spans residues 421–429 (PSAAFYLGA). Residues 430–450 (YVFIIFTGFLIVFLVFTFFKV) traverse the membrane as a helical segment. Residues 451 to 495 (PETRGRTFEEITRAFEGQGQDANRAEKGPIVEMNSMQPVKETATV) lie on the Cytoplasmic side of the membrane. S485 is subject to Phosphoserine. Phosphothreonine is present on T492.

This sequence belongs to the major facilitator superfamily. Sugar transporter (TC 2.A.1.1) family. Glucose transporter subfamily. In terms of assembly, interacts with SMIM43; the interaction may promote SLC2A3-mediated glucose transport to meet the energy needs of mesendoderm differentiation.

Its subcellular location is the cell membrane. The protein resides in the perikaryon. It is found in the cell projection. The enzyme catalyses D-glucose(out) = D-glucose(in). The catalysed reaction is D-galactose(in) = D-galactose(out). With respect to regulation, deoxyglucose transport is inhibited by D-glucose, D-galactose and maltose. Galactose transport is inhibited by D-glucose and maltose. In terms of biological role, facilitative glucose transporter. Can also mediate the uptake of various other monosaccharides across the cell membrane. Mediates the uptake of glucose, 2-deoxyglucose, galactose, mannose, xylose and fucose, and probably also dehydroascorbate. Does not mediate fructose transport. Required for mesendoderm differentiation. This Canis lupus familiaris (Dog) protein is Solute carrier family 2, facilitated glucose transporter member 3.